The following is a 109-amino-acid chain: Iron-sulfur assembly protein IscA-like 3, mitochondrial (109 aa).

The transit peptide at Met1–Gln18 directs the protein to the mitochondrion. Positions 37, 100, and 102 each coordinate Fe cation.

It belongs to the HesB/IscA family. Homodimer; may form tetramers and higher multimers. Fe cation serves as cofactor.

The protein localises to the mitochondrion. Functionally, involved in the assembly of mitochondrial iron-sulfur proteins. Probably involved in the binding of an intermediate of Fe/S cluster assembly. The protein is Iron-sulfur assembly protein IscA-like 3, mitochondrial of Arabidopsis thaliana (Mouse-ear cress).